A 173-amino-acid chain; its full sequence is Regulator of ribonuclease activity A (173 aa).

It belongs to the RraA family. Homotrimer. Binds to both RNA-binding sites in the C-terminal region of Rne and to RhlB.

The protein localises to the cytoplasm. Functionally, globally modulates RNA abundance by binding to RNase E (Rne) and regulating its endonucleolytic activity. Can modulate Rne action in a substrate-dependent manner by altering the composition of the degradosome. Modulates RNA-binding and helicase activities of the degradosome. The protein is Regulator of ribonuclease activity A of Vibrio vulnificus (strain YJ016).